Consider the following 151-residue polypeptide: Deoxyuridine 5'-triphosphate nucleotidohydrolase (151 aa).

Substrate is bound by residues 70–72 (RSG), Asn83, 87–89 (LID), and Met97.

It belongs to the dUTPase family. In terms of assembly, homotrimer. It depends on Mg(2+) as a cofactor.

It carries out the reaction dUTP + H2O = dUMP + diphosphate + H(+). Its pathway is pyrimidine metabolism; dUMP biosynthesis; dUMP from dCTP (dUTP route): step 2/2. Its function is as follows. This enzyme is involved in nucleotide metabolism: it produces dUMP, the immediate precursor of thymidine nucleotides and it decreases the intracellular concentration of dUTP so that uracil cannot be incorporated into DNA. The polypeptide is Deoxyuridine 5'-triphosphate nucleotidohydrolase (Escherichia fergusonii (strain ATCC 35469 / DSM 13698 / CCUG 18766 / IAM 14443 / JCM 21226 / LMG 7866 / NBRC 102419 / NCTC 12128 / CDC 0568-73)).